The sequence spans 135 residues: Protein PsiE homolog (135 aa).

The next 4 helical transmembrane spans lie at 14–34 (LQTI…IFLV), 54–74 (YQLI…ALIV), 82–102 (HFPL…LIIV), and 107–127 (PSDT…LYLA).

It belongs to the PsiE family.

It is found in the cell inner membrane. This chain is Protein PsiE homolog, found in Pectobacterium atrosepticum (strain SCRI 1043 / ATCC BAA-672) (Erwinia carotovora subsp. atroseptica).